Here is a 62-residue protein sequence, read N- to C-terminus: Large ribosomal subunit protein uL30 (62 aa).

The protein belongs to the universal ribosomal protein uL30 family. Part of the 50S ribosomal subunit.

The polypeptide is Large ribosomal subunit protein uL30 (Shewanella frigidimarina (strain NCIMB 400)).